Reading from the N-terminus, the 351-residue chain is Flagellar P-ring protein (351 aa).

A signal peptide spans 1–20 (MKKILFLFTASLLLHVTLQA).

Belongs to the FlgI family. As to quaternary structure, the basal body constitutes a major portion of the flagellar organelle and consists of four rings (L,P,S, and M) mounted on a central rod.

Its subcellular location is the periplasm. It is found in the bacterial flagellum basal body. Its function is as follows. Assembles around the rod to form the L-ring and probably protects the motor/basal body from shearing forces during rotation. The polypeptide is Flagellar P-ring protein (Sulfurimonas denitrificans (strain ATCC 33889 / DSM 1251) (Thiomicrospira denitrificans (strain ATCC 33889 / DSM 1251))).